An 81-amino-acid polypeptide reads, in one-letter code: MKTVFAILFLAFIALTYARSYEDVKEEIKNEVVKEILEDLEEESDELDDKSKEINDAKPYRWLRNKWWRRIRPDIRMAGKK.

The first 18 residues, 1–18, serve as a signal peptide directing secretion; that stretch reads MKTVFAILFLAFIALTYA. The propeptide occupies 19-57; that stretch reads RSYEDVKEEIKNEVVKEILEDLEEESDELDDKSKEINDA. An Alanine amide modification is found at alanine 78.

It belongs to the arminin family. Expressed in entodermal epithelium along the body column.

The protein resides in the secreted. It localises to the target cell membrane. Antimicrobial peptide with a broad-spectrum antimicrobial activity. Keeps its antibacterial activity under a wide range of salt concentrations that mimic physiological conditions of human blood, which is surprising, since Hydra is an obligate freshwater animal with nearly no salt tolerance. Does not affect red blood cells. The protein is Arminin 2a of Hydra vulgaris (Hydra).